Consider the following 372-residue polypeptide: MDVEERLSLVLRYPTEEVITVEELRELFQGGYKLNHYIGFEISGFIHIGTGVVSMSKVVDLQRAGVRTTVFLADIHSWLNNKLGGDLDTIRRVAVTYYVETFKRIIEVLGGDPDATRFVLGSDLYHHNDEYWFLLMDITRHLTLSQVRHSLTILGRKMGESIPLAYLVYPPLQVADVFALGAHIPHGGIDQRRAHILARQVADKIRFYPLTVDGKRIKPVALHHRLLPALNISSKPSSKEELSELKMSKSIPQSAIFVHDSPEEIRQKVAKAYCPPREVEYNPVLELLRIAAFREERKTPLVIKRPEKYGGDVEVWKYEELEAMYKEGKIHPADLKAVTAEALAALLEPVYKFFQGPGAKLLEEMRNIAITR.

Residues Y37, Y169, Q173, D176, and Q191 each contribute to the L-tyrosine site. A 'KMSKS' region motif is present at residues 246–250; it reads KMSKS. K249 provides a ligand contact to ATP.

This sequence belongs to the class-I aminoacyl-tRNA synthetase family. TyrS type 4 subfamily. In terms of assembly, homodimer.

The protein localises to the cytoplasm. It carries out the reaction tRNA(Tyr) + L-tyrosine + ATP = L-tyrosyl-tRNA(Tyr) + AMP + diphosphate + H(+). Its function is as follows. Catalyzes the attachment of tyrosine to tRNA(Tyr) in a two-step reaction: tyrosine is first activated by ATP to form Tyr-AMP and then transferred to the acceptor end of tRNA(Tyr). The polypeptide is Tyrosine--tRNA ligase (Pyrobaculum calidifontis (strain DSM 21063 / JCM 11548 / VA1)).